A 2443-amino-acid chain; its full sequence is NFX1-type zinc finger-containing protein 1 homolog (2443 aa).

Disordered stretches follow at residues 212 to 339 (PHKQ…EGDH), 545 to 566 (SSDS…NVYG), and 583 to 672 (HRDN…FVSP). The segment covering 246-263 (ISISNSSPPGLSSVSPIP) has biased composition (low complexity). Residues 275–294 (PQPPGLSIPAPPGISLPTPP) are compositionally biased toward pro residues. Polar residues predominate over residues 297–310 (SLQNHQNDQFEQAH). Positions 311 to 322 (STISRMSENSSS) are enriched in low complexity. A compositionally biased stretch (polar residues) spans 545-564 (SSDSGRQVLSESRGAGSSNV). Basic and acidic residues-rich tracts occupy residues 601 to 638 (GEVH…RRDQ) and 662 to 672 (EHSRDDKFVSP). Residues 1040 to 1545 (MDESQRLAFC…MNLTISDKIV (506 aa)) form the UvrD-like helicase ATP-binding domain. 1061-1068 (GPPGTGKT) provides a ligand contact to ATP. 4 consecutive NF-X1-type zinc fingers follow at residues 1769–1791 (CGHV…RCLY), 1853–1873 (CGHA…ECSQ), 1912–1930 (CPHK…ECME), and 2027–2044 (CGHT…PCKA).

It belongs to the ZNFX1 family. Interacts with ego-1, csr-1, wago-1 and prg-1. Interacts with wago-4; the interaction promotes the transmission of epigenetic information across generations. As to expression, expressed in germs cells. Not expressed in somatic tissues.

It localises to the cytoplasm. The protein localises to the perinuclear region. Its subcellular location is the cytoplasmic granule. The enzyme catalyses ATP + H2O = ADP + phosphate + H(+). Epigenetic inheritance factor which, in association with the Argonaute protein wago-4, mediates small RNA-directed transgenerational epigenetic inheritance and thus balances the transgenerational inheritance of epigenetic information. Specifically, maintains a balanced production of small RNAs by preventing the spread of epigenetic signals towards the 5'-end of target mRNAs. Plays a role in small RNA-induced gene silencing in the germline. This is NFX1-type zinc finger-containing protein 1 homolog from Caenorhabditis elegans.